The chain runs to 129 residues: Type II secretion system protein I (129 aa).

A propeptide spans methionine 1–glycine 6 (leader sequence). Phenylalanine 7 is modified (N-methylphenylalanine). The helical transmembrane segment at phenylalanine 7–leucine 27 threads the bilayer.

This sequence belongs to the GSP I family. Type II secretion is composed of four main components: the outer membrane complex, the inner membrane complex, the cytoplasmic secretion ATPase and the periplasm-spanning pseudopilus. Forms the tip of the type II pseudopilus by interacting with XcpU, XcpW and XcpX. Interacts with core component XcpT. Cleaved by prepilin peptidase. Post-translationally, methylated by prepilin peptidase at the amino group of the N-terminal phenylalanine once the leader sequence is cleaved by prepilin peptidase.

It is found in the cell inner membrane. Component of the type II secretion system required for the energy-dependent secretion of extracellular factors such as proteases and toxins from the periplasm. Part of the pseudopilus tip complex that is critical for the recognition and binding of secretion substrates. Type II pseudopilus confers increased bacterial adhesive capabilities. This is Type II secretion system protein I (xcpV) from Pseudomonas aeruginosa (strain ATCC 15692 / DSM 22644 / CIP 104116 / JCM 14847 / LMG 12228 / 1C / PRS 101 / PAO1).